The following is a 141-amino-acid chain: Stage V sporulation protein AB (141 aa).

A run of 4 helical transmembrane segments spans residues 7–27 (FIIF…VAFL), 45–65 (FVQA…WETL), 75–95 (WIAV…AAAL), and 115–135 (IIIL…FHWL).

The protein localises to the cell membrane. The sequence is that of Stage V sporulation protein AB (spoVAB) from Bacillus subtilis (strain 168).